The primary structure comprises 382 residues: Protein arginine N-methyltransferase PRMT10 (382 aa).

A disordered region spans residues 1 to 21 (MASLPNGAASASAASSAAGGG). Residues 7–17 (GAASASAASSA) show a composition bias toward low complexity. The 332-residue stretch at 28–359 (EVDFANYFCT…KENHRLMDME (332 aa)) folds into the SAM-dependent MTase PRMT-type domain. Active-site residues include E142 and E151. The segment at 189–229 (ENKMEDLEIAMHDWNLFVEDTESYYGVNMNVLTKAYRAEHE) is dimerization arm.

The protein belongs to the class I-like SAM-binding methyltransferase superfamily. Protein arginine N-methyltransferase family. As to quaternary structure, ring-like homodimer.

It carries out the reaction L-arginyl-[protein] + 2 S-adenosyl-L-methionine = N(omega),N(omega)-dimethyl-L-arginyl-[protein] + 2 S-adenosyl-L-homocysteine + 2 H(+). Functionally, methylates (mono and asymmetric dimethylation) the guanidino nitrogens of arginyl residues in some proteins. The polypeptide is Protein arginine N-methyltransferase PRMT10 (PRMT10) (Oryza sativa subsp. indica (Rice)).